We begin with the raw amino-acid sequence, 60 residues long: MAKIKITWVKSTIGYKFDQAATIKALGFKKLNQSVIQDDSSAIRGMILKVRHLVVLEEVI.

The protein belongs to the universal ribosomal protein uL30 family. Part of the 50S ribosomal subunit.

This chain is Large ribosomal subunit protein uL30, found in Dehalococcoides mccartyi (strain ATCC BAA-2100 / JCM 16839 / KCTC 5957 / BAV1).